Consider the following 534-residue polypeptide: Importin subunit alpha-1b (534 aa).

The IBB domain maps to 1 to 58 (MSLRPSERAEVRRSRYKVAVDADEGRRRREDNMVEIRKSRREESLLKKRRDGLPAAAA). ARM repeat units lie at residues 111-151 (SPPI…NIAS), 154-193 (SDNTKVVVESGAVPIFVKLLSSPSEDVREQAVWALGNVAG), 196-236 (PKCR…NFCR), 238-277 (KPQPNFEQVKPALSALQRLIHSQDEEVLTDACWALSYLSD), 280-319 (NDKIQAVIESGVFPRLVELLMHPSASVLIPALRTVGNIVT), 322-362 (DMQT…NITA), 365-404 (REQIQAVINANIIAPLVHLLQTAEFDIKKEAAWAISNATS), and 408-447 (HDQIKYLVAQGCIKPLCDLLVCPDPRIVTVCLEGLENILK). The segment at 505 to 534 (DAMPSGDNAQNGFNFGNQQPNVPSGGFNFG) is disordered. Positions 514-523 (QNGFNFGNQQ) are enriched in low complexity.

It belongs to the importin alpha family. As to quaternary structure, forms a complex with importin subunit beta-1. The whole complex, most stable and composed of importin alpha and importin beta, is referred to as PTAC or pore targeting complex. As to expression, highly expressed in root and weakly in callus, etiolated leaf and green leaf.

The protein localises to the cytoplasm. It localises to the perinuclear region. Functions in nuclear protein import. Binds specifically and directly to substrates containing either a simple or bipartite NLS motif. Promotes docking of import substrates to the nuclear envelope. In conjunction with importin beta-1, mediates the nuclear envelope docking, and the subsequent translocation into the nucleus of the constitutive morphogenetic 1 (COP1) protein containing bipartite NLS motif. The protein is Importin subunit alpha-1b of Oryza sativa subsp. japonica (Rice).